Reading from the N-terminus, the 391-residue chain is Elongation factor Tu (391 aa).

The tr-type G domain maps to 10–201 (KPHVNIGTIG…AVDAYIPTPE (192 aa)). The G1 stretch occupies residues 19-26 (GHVDHGKT). Residue 19 to 26 (GHVDHGKT) participates in GTP binding. Residue Thr-26 participates in Mg(2+) binding. Positions 55-59 (GITIS) are G2. A G3 region spans residues 76-79 (DCPG). GTP-binding positions include 76–80 (DCPGH) and 131–134 (NKVD). The segment at 131–134 (NKVD) is G4. A G5 region spans residues 169–171 (SAL).

It belongs to the TRAFAC class translation factor GTPase superfamily. Classic translation factor GTPase family. EF-Tu/EF-1A subfamily. In terms of assembly, monomer.

It is found in the cytoplasm. The enzyme catalyses GTP + H2O = GDP + phosphate + H(+). In terms of biological role, GTP hydrolase that promotes the GTP-dependent binding of aminoacyl-tRNA to the A-site of ribosomes during protein biosynthesis. The protein is Elongation factor Tu of Rhizobium meliloti (strain 1021) (Ensifer meliloti).